Reading from the N-terminus, the 304-residue chain is Small ribosomal subunit protein uS3 (304 aa).

Residues 17–86 enclose the KH type-2 domain; sequence MDEYFAKQLS…NPQIDAQEVK (70 aa).

This sequence belongs to the universal ribosomal protein uS3 family. In terms of assembly, part of the 30S ribosomal subunit.

In terms of biological role, binds the lower part of the 30S subunit head. The sequence is that of Small ribosomal subunit protein uS3 from Methanococcoides burtonii (strain DSM 6242 / NBRC 107633 / OCM 468 / ACE-M).